The sequence spans 294 residues: MRDYIVRATAYNNKILAIAAFSTQTAQKAKEIHNLTPTTCAALGRALTAVAMMRVMMKGEKDKVTLVIKGDGPIGNIVVVSNYPGIVKGYVGNPTVDLPLSEKGKLDVGKAVGKNGYVTVIKDIGLKEPYVGTVELQTGEIGEDIAYYFYTSEQVPSAVGVGVLVGKEGNVLASGGFIIQLLPNIEEEVVAKVEEALKNISSVTELLRKGYLPEDILNHILGEMGLNILERVDLKYECDCSQERFETAIIALGKEEIKKLIAEGQSVEAVCHFCGKKYLIEESRLKELLRIAEE.

Intrachain disulfides connect cysteine 238–cysteine 240 and cysteine 271–cysteine 274.

Belongs to the HSP33 family. In terms of processing, under oxidizing conditions two disulfide bonds are formed involving the reactive cysteines. Under reducing conditions zinc is bound to the reactive cysteines and the protein is inactive.

The protein resides in the cytoplasm. Functionally, redox regulated molecular chaperone. Protects both thermally unfolding and oxidatively damaged proteins from irreversible aggregation. Plays an important role in the bacterial defense system toward oxidative stress. This Thermoanaerobacter pseudethanolicus (strain ATCC 33223 / 39E) (Clostridium thermohydrosulfuricum) protein is 33 kDa chaperonin.